The following is a 95-amino-acid chain: uncharacterized protein (95 aa).

2 repeat units span residues 67 to 74 (GCGCGCGC) and 85 to 92 (CGGCCGCG). Positions 67–92 (GCGCGCGCATVAAVSPVPCGGCCGCG) are 2 X 8 AA approximate repeats.

This is an uncharacterized protein from Caenorhabditis elegans.